A 735-amino-acid chain; its full sequence is Ion-translocating oxidoreductase complex subunit C (735 aa).

2 4Fe-4S ferredoxin-type domains span residues 368 to 397 (MGAP…QQLY) and 407 to 436 (KATA…VQYF). 8 residues coordinate [4Fe-4S] cluster: Cys-377, Cys-380, Cys-383, Cys-387, Cys-416, Cys-419, Cys-422, and Cys-426. The disordered stretch occupies residues 538 to 715 (KQAAHPMADS…PADPRKAAVA (178 aa)). The span at 556–565 (KAAVEAAIAR) shows a compositional bias: low complexity.

Belongs to the 4Fe4S bacterial-type ferredoxin family. RnfC subfamily. The complex is composed of six subunits: RsxA, RsxB, RsxC, RsxD, RsxE and RsxG. [4Fe-4S] cluster serves as cofactor.

It is found in the cell inner membrane. Part of a membrane-bound complex that couples electron transfer with translocation of ions across the membrane. Required to maintain the reduced state of SoxR. In Salmonella typhimurium (strain LT2 / SGSC1412 / ATCC 700720), this protein is Ion-translocating oxidoreductase complex subunit C.